The sequence spans 498 residues: Lysine--tRNA ligase (498 aa).

Mg(2+) is bound by residues Glu-408 and Glu-415.

The protein belongs to the class-II aminoacyl-tRNA synthetase family. In terms of assembly, homodimer. The cofactor is Mg(2+).

The protein localises to the cytoplasm. The enzyme catalyses tRNA(Lys) + L-lysine + ATP = L-lysyl-tRNA(Lys) + AMP + diphosphate. In Listeria innocua serovar 6a (strain ATCC BAA-680 / CLIP 11262), this protein is Lysine--tRNA ligase.